The following is a 741-amino-acid chain: 1,4-alpha-glucan branching enzyme GlgB 2 (741 aa).

The disordered stretch occupies residues 1-38 (MALRDTSIPEPSGPVPPAPGACATAPPLDPTDRGRLLA). Aspartate 421 acts as the Nucleophile in catalysis. Catalysis depends on glutamate 474, which acts as the Proton donor.

This sequence belongs to the glycosyl hydrolase 13 family. GlgB subfamily. As to quaternary structure, monomer.

It carries out the reaction Transfers a segment of a (1-&gt;4)-alpha-D-glucan chain to a primary hydroxy group in a similar glucan chain.. It functions in the pathway glycan biosynthesis; glycogen biosynthesis. Functionally, catalyzes the formation of the alpha-1,6-glucosidic linkages in glycogen by scission of a 1,4-alpha-linked oligosaccharide from growing alpha-1,4-glucan chains and the subsequent attachment of the oligosaccharide to the alpha-1,6 position. In Streptomyces coelicolor (strain ATCC BAA-471 / A3(2) / M145), this protein is 1,4-alpha-glucan branching enzyme GlgB 2 (glgB2).